The following is a 1068-amino-acid chain: Leucine zipper protein 1 (1068 aa).

Ala-2 is subject to N-acetylalanine. A coiled-coil region spans residues Ala-11 to Leu-354. Disordered regions lie at residues Leu-251–Leu-292, Thr-375–Arg-402, and Ala-432–Glu-558. Basic and acidic residues predominate over residues Lys-254 to Leu-292. Phosphoserine is present on residues Ser-256, Ser-261, Ser-395, Ser-513, Ser-571, Ser-575, Ser-612, and Ser-660. Over residues Arg-510 to Ser-519 the composition is skewed to polar residues. The tract at residues Thr-677–Gly-700 is disordered. Thr-680 is subject to Phosphothreonine. Phosphoserine occurs at positions 691 and 746. A disordered region spans residues Gln-782–Pro-829. A compositionally biased stretch (low complexity) spans Thr-785–Ser-796. A required for interaction with FLNA region spans residues Ala-834–Pro-884. Ser-906 is subject to Phosphoserine. Positions Arg-924–Ala-945 are disordered. Residue Thr-952 is modified to Phosphothreonine. 2 disordered regions span residues Gln-959–Val-995 and Asn-1033–Asp-1068. Residues Arg-984–Glu-994 show a composition bias toward polar residues. A Phosphoserine modification is found at Ser-988.

Component of the CERF-1 ISWI chromatin remodeling complex (also called the CECR2-containing remodeling factor (CERF) complex) at least composed of CECR2 and SMARCA1. Component of the CERF-5 ISWI chromatin remodeling complex at least composed of CECR2 and SMARCA5/SNF2H. LUZP1 is detected as part of the CERF-1 and CERF-5 complexes in embryonic stem (ES) cells where it is involved in complex stabilization but is not detected in the complexes in the testis. Interacts (via C-terminus) with LIMA1/EPLIN; both proteins restrict ciliation and may work together to regulate this process. Interacts with myosin light chain MYL9; the interaction results in inhibition of phosphorylation of MYL9 by DAPK3. Interacts with DAPK3; the interaction is likely to occur throughout the cell cycle and reduces the LUZP1-mediated suppression of MYL9 phosphorylation. Interacts with the chromosomal passenger complex (CPC); CPC kinase activity is required for localization of LUZP1 to the centromere. In terms of tissue distribution, predominantly expressed in the brain (at protein level).

The protein resides in the cytoplasm. It localises to the cytoskeleton. The protein localises to the microtubule organizing center. Its subcellular location is the centrosome. It is found in the cilium basal body. The protein resides in the midbody. It localises to the chromosome. The protein localises to the centromere. Its subcellular location is the spindle. It is found in the stress fiber. The protein resides in the nucleus. It localises to the cell projection. The protein localises to the dendrite. Its subcellular location is the perikaryon. It is found in the cell junction. The protein resides in the tight junction. F-actin cross-linking protein. Stabilizes actin and acts as a negative regulator of primary cilium formation. Positively regulates the phosphorylation of both myosin II and protein phosphatase 1 regulatory subunit PPP1R12A/MYPT1 and promotes the assembly of myosin II stacks within actin stress fibers. Inhibits the phosphorylation of myosin light chain MYL9 by DAPK3 and suppresses the constriction velocity of the contractile ring during cytokinesis. Binds to microtubules and promotes epithelial cell apical constriction by up-regulating levels of diphosphorylated myosin light chain (MLC) through microtubule-dependent inhibition of MLC dephosphorylation by myosin phosphatase. Involved in regulation of cell migration, nuclear size and centriole number, probably through regulation of the actin cytoskeleton. Component of the CERF-1 and CERF-5 chromatin remodeling complexes in embryonic stem cells where it acts to stabilize the complexes. Plays a role in embryonic brain and cardiovascular development. This Mus musculus (Mouse) protein is Leucine zipper protein 1 (Luzp1).